A 622-amino-acid chain; its full sequence is 1-deoxy-D-xylulose-5-phosphate synthase (622 aa).

Residues His80 and 121 to 123 (GHS) each bind thiamine diphosphate. Asp152 serves as a coordination point for Mg(2+). Thiamine diphosphate contacts are provided by residues 153–154 (GA), Asn181, Tyr288, and Glu370. Mg(2+) is bound at residue Asn181.

Belongs to the transketolase family. DXPS subfamily. As to quaternary structure, homodimer. Mg(2+) is required as a cofactor. The cofactor is thiamine diphosphate.

The catalysed reaction is D-glyceraldehyde 3-phosphate + pyruvate + H(+) = 1-deoxy-D-xylulose 5-phosphate + CO2. It functions in the pathway metabolic intermediate biosynthesis; 1-deoxy-D-xylulose 5-phosphate biosynthesis; 1-deoxy-D-xylulose 5-phosphate from D-glyceraldehyde 3-phosphate and pyruvate: step 1/1. Functionally, catalyzes the acyloin condensation reaction between C atoms 2 and 3 of pyruvate and glyceraldehyde 3-phosphate to yield 1-deoxy-D-xylulose-5-phosphate (DXP). The polypeptide is 1-deoxy-D-xylulose-5-phosphate synthase (Shewanella putrefaciens (strain CN-32 / ATCC BAA-453)).